The chain runs to 75 residues: DNA-directed RNA polymerase subunit epsilon (75 aa).

The protein belongs to the RNA polymerase subunit epsilon family. RNAP is composed of a core of 2 alpha, a beta and a beta' subunit. The core is associated with a delta subunit, and at least one of epsilon or omega. When a sigma factor is associated with the core the holoenzyme is formed, which can initiate transcription.

The catalysed reaction is RNA(n) + a ribonucleoside 5'-triphosphate = RNA(n+1) + diphosphate. Functionally, a non-essential component of RNA polymerase (RNAP). The protein is DNA-directed RNA polymerase subunit epsilon of Lactobacillus gasseri (strain ATCC 33323 / DSM 20243 / BCRC 14619 / CIP 102991 / JCM 1131 / KCTC 3163 / NCIMB 11718 / NCTC 13722 / AM63).